The primary structure comprises 248 residues: Cytochrome c oxidase subunit 2 (248 aa).

Over M1 to Q43 the chain is Mitochondrial intermembrane. The helical transmembrane segment at V44 to G65 threads the bilayer. Over K66–E79 the chain is Mitochondrial matrix. A helical membrane pass occupies residues I80 to K99. The Mitochondrial intermembrane segment spans residues L100–E248. Cu cation is bound by residues H180, C215, E217, C219, H223, and M226. A Mg(2+)-binding site is contributed by E217.

Belongs to the cytochrome c oxidase subunit 2 family. As to quaternary structure, component of the cytochrome c oxidase (complex IV, CIV), a multisubunit enzyme composed of a catalytic core of 3 subunits and several supernumerary subunits. The complex exists as a monomer or a dimer and forms supercomplexes (SCs) in the inner mitochondrial membrane with ubiquinol-cytochrome c oxidoreductase (cytochrome b-c1 complex, complex III, CIII). Cu cation serves as cofactor.

It localises to the mitochondrion inner membrane. It carries out the reaction 4 Fe(II)-[cytochrome c] + O2 + 8 H(+)(in) = 4 Fe(III)-[cytochrome c] + 2 H2O + 4 H(+)(out). Component of the cytochrome c oxidase, the last enzyme in the mitochondrial electron transport chain which drives oxidative phosphorylation. The respiratory chain contains 3 multisubunit complexes succinate dehydrogenase (complex II, CII), ubiquinol-cytochrome c oxidoreductase (cytochrome b-c1 complex, complex III, CIII) and cytochrome c oxidase (complex IV, CIV), that cooperate to transfer electrons derived from NADH and succinate to molecular oxygen, creating an electrochemical gradient over the inner membrane that drives transmembrane transport and the ATP synthase. Cytochrome c oxidase is the component of the respiratory chain that catalyzes the reduction of oxygen to water. Electrons originating from reduced cytochrome c in the intermembrane space (IMS) are transferred via the dinuclear copper A center (CU(A)) of subunit 2 and heme A of subunit 1 to the active site in subunit 1, a binuclear center (BNC) formed by heme A3 and copper B (CU(B)). The BNC reduces molecular oxygen to 2 water molecules using 4 electrons from cytochrome c in the IMS and 4 protons from the mitochondrial matrix. The protein is Cytochrome c oxidase subunit 2 (COII) of Metridium senile (Brown sea anemone).